The chain runs to 132 residues: Tumor suppressor ARF (132 aa).

The tract at residues 1-64 is interaction with CDK5RAP3 and MDM2; sequence MVRRFLVTLR…LGQQPLPRRP (64 aa). The interval 56 to 132 is disordered; sequence GQQPLPRRPG…CLGPSARGPG (77 aa). Residues 71–83 show a composition bias toward low complexity; sequence RPSGGAAAAPRRG. Residues 84 to 99 are compositionally biased toward basic residues; the sequence is AQLRRPRHSHPTRARR. Residues 103-117 show a composition bias toward gly residues; the sequence is GLPGHAGGAAPGRGA.

Does not interact with cyclins, CDK1, CDK2, CDK4, CDK5 or CDK6. Binds to BCL6, E2F1, HUWE1, MDM2, MYC, NPM1/B23, TOP1/TOPOI and UBE2I/UBC9. Interacts with TBRG1 and COMMD1. Interacts with CDKN2AIP and E4F1. Interacts with CDK5RAP3 and MDM2; form a ternary complex involved in regulation of p53/TP53. Interacts with NOP53; the interaction is direct and promotes ARF nucleoplasmic relocalization and ubiquitin-mediated proteasomal degradation. Interacts with TTF1 (via the N-terminal region (NRD) and a C-terminal region); the interaction is direct and inhibits the nucleolar localization of TTF1. As to quaternary structure, interacts with C1QBP. In terms of processing, ubiquitinated in normal cells by TRIP12 via the ubiquitin fusion degradation (UFD) pathway, a process that mediates ubiquitination at the N-terminus, regardless of the absence of lysine residues. Ubiquitination leads to its proteasomal degradation. In cancer cells, however, TRIP12 is located in a different cell compartment, preventing ubiquitination and degradation.

Its subcellular location is the nucleus. The protein localises to the nucleolus. The protein resides in the nucleoplasm. It is found in the mitochondrion. Functionally, capable of inducing cell cycle arrest in G1 and G2 phases. Acts as a tumor suppressor. Binds to MDM2 and blocks its nucleocytoplasmic shuttling by sequestering it in the nucleolus. This inhibits the oncogenic action of MDM2 by blocking MDM2-induced degradation of p53 and enhancing p53-dependent transactivation and apoptosis. Also induces G2 arrest and apoptosis in a p53-independent manner by preventing the activation of cyclin B1/CDC2 complexes. Binds to BCL6 and down-regulates BCL6-induced transcriptional repression. Binds to E2F1 and MYC and blocks their transcriptional activator activity but has no effect on MYC transcriptional repression. Binds to TOP1/TOPOI and stimulates its activity. This complex binds to rRNA gene promoters and may play a role in rRNA transcription and/or maturation. Interacts with NPM1/B23 and promotes its polyubiquitination and degradation, thus inhibiting rRNA processing. Plays a role in inhibiting ribosome biogenesis, perhaps by binding to the nucleolar localization sequence of transcription termination factor TTF1, and thereby preventing nucleolar localization of TTF1. Interacts with COMMD1 and promotes its 'Lys63'-linked polyubiquitination. Interacts with UBE2I/UBC9 and enhances sumoylation of a number of its binding partners including MDM2 and E2F1. Binds to HUWE1 and represses its ubiquitin ligase activity. May play a role in controlling cell proliferation and apoptosis during mammary gland development. In terms of biological role, may be involved in regulation of autophagy and caspase-independent cell death; the short-lived mitochondrial isoform is stabilized by C1QBP. The polypeptide is Tumor suppressor ARF (Homo sapiens (Human)).